We begin with the raw amino-acid sequence, 331 residues long: NmrA-like family domain-containing oxidoreductase himF (331 aa).

NADP(+)-binding positions include glycine 8–glutamine 13, arginine 34–serine 38, aspartate 55–glycine 56, threonine 76–glycine 78, lysine 133, and tryptophan 155–alanine 167.

This sequence belongs to the NmrA-type oxidoreductase family.

The protein operates within secondary metabolite biosynthesis. In terms of biological role, nmrA-like family domain-containing oxidoreductase; part of the him gene cluster that mediates the biosynthesis of himeic acid A, a ubiquitin-activating enzyme (E1) inhibitor. First, himA, together with the trans-enoyl reductase himH, catalyzes the formation of apolyketide chain, which is then condensed with leucine by the NRPS activity of himA. Dieckmann cyclization and release from himA gives a tetramic acid intermediate as the product of himA PKS-NRPS. HimG then catalyzes alpha-oxidation of the tetramic acid ring, with a subsequent rearrangement to yield apyrone intermediate. Two terminal methyl groups of polyketide and amide side chains are oxidized to carboxylic acids by himC cytochrome P450 monooxygenase to form himeic acid A. Himeic acid A is further converted to himeic acid B and C during culture growth. No gene responsible for pyrone to pyridone conversion was found in the him gene cluster and himeic acid A is non-enzymatically converted to himeic acid C by the incorporation of an ammonium nitrogen atom in a pH5 buffer, and to himeic acid B at a conversion ratio of 50% during incubation in MeOH for 5 days. In Aspergillus japonicus, this protein is NmrA-like family domain-containing oxidoreductase himF.